A 280-amino-acid polypeptide reads, in one-letter code: Probable endonuclease 4 (280 aa).

The Zn(2+) site is built by H69, H109, E145, D179, H182, H216, D229, H231, and E261.

It belongs to the AP endonuclease 2 family. The cofactor is Zn(2+).

The enzyme catalyses Endonucleolytic cleavage to 5'-phosphooligonucleotide end-products.. Its function is as follows. Endonuclease IV plays a role in DNA repair. It cleaves phosphodiester bonds at apurinic or apyrimidinic (AP) sites, generating a 3'-hydroxyl group and a 5'-terminal sugar phosphate. This chain is Probable endonuclease 4, found in Pelodictyon phaeoclathratiforme (strain DSM 5477 / BU-1).